We begin with the raw amino-acid sequence, 276 residues long: Ammonia monooxygenase alpha subunit (276 aa).

Transmembrane regions (helical) follow at residues 29–49 (VYFPILIILLVGTYHMHFMLL), 66–86 (PVVTPIVGITYCSAIMYYLWV), 96–116 (LCVVCLLIGEWLTRYWGFYWW), 123–143 (FVTPGIMLPGALMLDFTLYLT), and 150–170 (ALVGGGFFGLLFYPGNWPIFG). Cu(+) is bound by residues Asp187, His191, and His204. The helical transmembrane segment at 219 to 239 (VIAAFFSAFVSMLMFTVWWYL) threads the bilayer.

In terms of assembly, the soluble ammonia monooxygenase is a nonamer composed of three alpha subunits (AmoA), three beta subunits (AmoB) and three gamma subunits (Cytochrome c1 PetC). Cu(+) is required as a cofactor.

Its subcellular location is the cell membrane. It is found in the cytoplasm. It carries out the reaction AH2 + NH4(+) + O2 = hydroxylamine + A + H2O + H(+). Its activity is regulated as follows. In vitro, inhibited by acetylene. In fact, acetylene is oxidized to ketene which binds irreversibly to His-191 of ammonia monooxygenase alpha subunit (AmoA). In terms of biological role, part of the ammonia monooxygenase complex, which catalyzes the oxidation of ammonia to hydroxylamine, the first reaction in the process of ammonia oxidation to nitrite. The polypeptide is Ammonia monooxygenase alpha subunit (Nitrosomonas europaea (strain ATCC 19718 / CIP 103999 / KCTC 2705 / NBRC 14298)).